The sequence spans 319 residues: Acetyl-coenzyme A carboxylase carboxyl transferase subunit alpha (319 aa).

The 262-residue stretch at 35 to 296 folds into the CoA carboxyltransferase C-terminal domain; the sequence is NIDEEVHRLR…KAQLLADLAD (262 aa).

This sequence belongs to the AccA family. In terms of assembly, acetyl-CoA carboxylase is a heterohexamer composed of biotin carboxyl carrier protein (AccB), biotin carboxylase (AccC) and two subunits each of ACCase subunit alpha (AccA) and ACCase subunit beta (AccD).

Its subcellular location is the cytoplasm. The catalysed reaction is N(6)-carboxybiotinyl-L-lysyl-[protein] + acetyl-CoA = N(6)-biotinyl-L-lysyl-[protein] + malonyl-CoA. Its pathway is lipid metabolism; malonyl-CoA biosynthesis; malonyl-CoA from acetyl-CoA: step 1/1. Its function is as follows. Component of the acetyl coenzyme A carboxylase (ACC) complex. First, biotin carboxylase catalyzes the carboxylation of biotin on its carrier protein (BCCP) and then the CO(2) group is transferred by the carboxyltransferase to acetyl-CoA to form malonyl-CoA. This chain is Acetyl-coenzyme A carboxylase carboxyl transferase subunit alpha, found in Shigella sonnei (strain Ss046).